Reading from the N-terminus, the 323-residue chain is Calcium homeostasis modulator protein 2 (323 aa).

The Cytoplasmic portion of the chain corresponds to 1–21 (MAALIAENFRFLSLFFKSKDV). The tract at residues 14–39 (LFFKSKDVMIFNGLVALGTVGSQELF) is central pore. A helical transmembrane segment spans residues 22–43 (MIFNGLVALGTVGSQELFSVVA). At 44–52 (FHCPCSPAR) the chain is on the extracellular side. 2 disulfide bridges follow: cysteine 46–cysteine 130 and cysteine 48–cysteine 162. The helical transmembrane segment at 53–76 (NYLYGLTAIGVPALALFLIGVILN) threads the bilayer. The Cytoplasmic segment spans residues 77–101 (NHTWNLVAECQYRRAKNCSAAPTFL). Residues 102 to 132 (LLSSILGRAAVAPVTWSVISLLRGEAYVCAL) form a helical membrane-spanning segment. Residues 133-179 (SEFVDPSSLTAGDEGFPPDHATEILARFPCGEGPANLSGFREEVSRR) lie on the Extracellular side of the membrane. The segment at 145 to 152 (DEGFPPDH) is hemichannel docking. The helical transmembrane segment at 180–206 (LKYESQLFGWLLIGVVAILVFLTKCFK) threads the bilayer. Topologically, residues 207–323 (HYCSPLSYRQ…DNVEMALLTV (117 aa)) are cytoplasmic. The tract at residues 214 to 251 (YRQEAYWAQYRTNEDQLFQRTAEVHSRVLAANNVRRFF) is intersubunit interaction.

This sequence belongs to the CALHM family. In terms of assembly, homo-undecamer. Two undecameric hemichannels can assemble in a head-to-head manner to form a gap junction.

It localises to the cell membrane. It catalyses the reaction ATP(in) = ATP(out). Pore-forming subunit of Ca(2+) homeostasis modulator channels. Mediates ATP release from astrocytes and ATP-induced Ca(2+) influx in microglia thus regulating neuronal ATP and Ca(2+) homeostasis, synaptic transmission and neuroinflammatory response. May form intercellular gap junctions. The gating mechanism remains unknown. This Rattus norvegicus (Rat) protein is Calcium homeostasis modulator protein 2 (Calhm2).